Consider the following 123-residue polypeptide: Small ribosomal subunit protein uS13 (123 aa).

The disordered stretch occupies residues 92–123 (RKGLPVRGQKTKTNARTRKGPKKLVGAKKKSK).

Belongs to the universal ribosomal protein uS13 family. Part of the 30S ribosomal subunit. Forms a loose heterodimer with protein S19. Forms two bridges to the 50S subunit in the 70S ribosome.

Located at the top of the head of the 30S subunit, it contacts several helices of the 16S rRNA. In the 70S ribosome it contacts the 23S rRNA (bridge B1a) and protein L5 of the 50S subunit (bridge B1b), connecting the 2 subunits; these bridges are implicated in subunit movement. Contacts the tRNAs in the A and P-sites. This is Small ribosomal subunit protein uS13 from Clostridium kluyveri (strain NBRC 12016).